The sequence spans 356 residues: Geranylgeranyl pyrophosphate synthase penG (356 aa).

Lys83, Arg86, and His115 together coordinate isopentenyl diphosphate. Mg(2+) is bound by residues Asp122 and Asp126. Position 131 (Arg131) interacts with dimethylallyl diphosphate. Isopentenyl diphosphate is bound at residue Arg132. Lys209, Thr210, and Gln243 together coordinate dimethylallyl diphosphate. Position 246 (Asp246) interacts with Mg(2+). The dimethylallyl diphosphate site is built by Asn250, Lys260, and Lys270.

It belongs to the FPP/GGPP synthase family. It depends on Mg(2+) as a cofactor.

It catalyses the reaction isopentenyl diphosphate + dimethylallyl diphosphate = (2E)-geranyl diphosphate + diphosphate. The enzyme catalyses isopentenyl diphosphate + (2E)-geranyl diphosphate = (2E,6E)-farnesyl diphosphate + diphosphate. The catalysed reaction is isopentenyl diphosphate + (2E,6E)-farnesyl diphosphate = (2E,6E,10E)-geranylgeranyl diphosphate + diphosphate. The protein operates within secondary metabolite biosynthesis. Geranylgeranyl pyrophosphate synthase; part of the gene cluster that mediates the biosynthesis of the indole diterpenes penitrems. The geranylgeranyl diphosphate (GGPP) synthase ptmG catalyzes the first step in penitrem biosynthesis via conversion of farnesyl pyrophosphate and isopentyl pyrophosphate into geranylgeranyl pyrophosphate (GGPP). Condensation of indole-3-glycerol phosphate with GGPP by the prenyl transferase ptmC then forms 3-geranylgeranylindole (3-GGI). Epoxidation by the FAD-dependent monooxygenase ptmM leads to a epoxidized-GGI that is substrate of the terpene cyclase ptmB for cyclization to yield paspaline. Paspaline is subsequently converted to 13-desoxypaxilline by the cytochrome P450 monooxygenase ptmP, the latter being then converted to paxilline by the cytochrome P450 monooxygenase ptmQ. Paxilline is converted to beta-paxitriol via C-10 ketoreduction by the short-chain dehydrogenase ptmH which can be monoprenylated at the C-20 by the indole diterpene prenyltransferase ptmD. A two-step elimination (acetylation and elimination) process performed by the O-acetyltransferase ptmV and ptmI leads to the production of the prenylated form of penijanthine. The FAD-linked oxidoreductase ptmO then converts the prenylated form of penijanthine into PC-M5 which is in turn transformed into PC-M4 by the aromatic dimethylallyltransferase ptmE. Five sequential oxidative transformations performed by the cytochrome P450 monooxygenases ptmK, ptmU, ptmL, ptmN and ptmJ yield the various penitrem compounds. PtmK, ptmU and ptmM are involved in the formation of the key bicyclic ring of penitrem C via the formation of the intermediates secopenitrem D and penitrem D. PtmL catalyzes the epoxidation of penitrem D and C to yield penitrem B and F, respectively. PtmJ catalyzes the last benzylic hydroxylation to convert penitrem B to prenitrem E and penitrem F to penitrem A. This Penicillium ochrochloron protein is Geranylgeranyl pyrophosphate synthase penG.